Reading from the N-terminus, the 479-residue chain is Probable glycine dehydrogenase (decarboxylating) subunit 2 (479 aa).

N6-(pyridoxal phosphate)lysine is present on Lys-265.

This sequence belongs to the GcvP family. C-terminal subunit subfamily. In terms of assembly, the glycine cleavage system is composed of four proteins: P, T, L and H. In this organism, the P 'protein' is a heterodimer of two subunits. Pyridoxal 5'-phosphate serves as cofactor.

It catalyses the reaction N(6)-[(R)-lipoyl]-L-lysyl-[glycine-cleavage complex H protein] + glycine + H(+) = N(6)-[(R)-S(8)-aminomethyldihydrolipoyl]-L-lysyl-[glycine-cleavage complex H protein] + CO2. The glycine cleavage system catalyzes the degradation of glycine. The P protein binds the alpha-amino group of glycine through its pyridoxal phosphate cofactor; CO(2) is released and the remaining methylamine moiety is then transferred to the lipoamide cofactor of the H protein. The chain is Probable glycine dehydrogenase (decarboxylating) subunit 2 from Pseudothermotoga lettingae (strain ATCC BAA-301 / DSM 14385 / NBRC 107922 / TMO) (Thermotoga lettingae).